Reading from the N-terminus, the 276-residue chain is Small ribosomal subunit protein uS2 (276 aa).

Residues 254–276 are disordered; sequence LAGATAAAPAEGAVATETTPTEG. A compositionally biased stretch (low complexity) spans 255-276; sequence AGATAAAPAEGAVATETTPTEG.

The protein belongs to the universal ribosomal protein uS2 family.

In Mycobacterium ulcerans (strain Agy99), this protein is Small ribosomal subunit protein uS2.